The primary structure comprises 60 residues: Large ribosomal subunit protein uL30 (60 aa).

It belongs to the universal ribosomal protein uL30 family. In terms of assembly, part of the 50S ribosomal subunit.

The protein is Large ribosomal subunit protein uL30 of Oceanobacillus iheyensis (strain DSM 14371 / CIP 107618 / JCM 11309 / KCTC 3954 / HTE831).